The sequence spans 249 residues: Protein-lysine 6-oxidase (249 aa).

Y19 carries the sulfotyrosine modification. The interval 45–249 (PDLVPDPYYI…YASGCTISPY (205 aa)) is lysyl-oxidase like. 5 cysteine pairs are disulfide-bonded: C70–C76, C123–C172, C156–C162, C183–C193, and C230–C244. Residues H124, H126, and H128 each contribute to the Cu cation site. Residues 152 to 187 (KASFCLEDTSCDYGYHRRFACTAHTQGLSPGCYDTY) constitute a cross-link (lysine tyrosylquinone (Lys-Tyr)). Y187 carries the 2',4',5'-topaquinone modification.

The protein belongs to the lysyl oxidase family. Interacts with MFAP4. Interacts (via propeptide) with EFEMP2; this interaction is strong and facilitates formation of ternary complexes with ELN during elastic fiber assembly; this interaction limits interaction of EFEMP2 with FBLN5. Requires Cu cation as cofactor. Lysine tyrosylquinone residue is required as a cofactor. The lysine tyrosylquinone cross-link (LTQ) is generated by condensation of the epsilon-amino group of a lysine with a topaquinone produced by oxidation of tyrosine. In terms of processing, proteolytically cleaved by BMP1 which removes the propeptide. Also proteolytically cleaved by ADAMTS2 and ADAMTS14, but not by ADAMTS3, at an additional cleavage site downstream of the BMP1 cleavage site. The propeptide plays a role in directing the deposition of this enzyme to elastic fibers, via interaction with tropoelastin. Cleavage by BMP1 to remove the propeptide does not increase enzymatic activity but increases binding to collagen. Cleavage by ADAMTS2 produces a form with reduced collagen-binding activity. Post-translationally, sulfated at Tyr-19 and also at either Tyr-15 or Tyr-16 which enhances binding to collagen.

It is found in the secreted. Its subcellular location is the extracellular space. It carries out the reaction L-lysyl-[protein] + O2 + H2O = (S)-2-amino-6-oxohexanoyl-[protein] + H2O2 + NH4(+). Functionally, responsible for the post-translational oxidative deamination of peptidyl lysine residues in precursors to fibrous collagen and elastin. Regulator of Ras expression. May play a role in tumor suppression. Plays a role in the aortic wall architecture. The chain is Protein-lysine 6-oxidase from Sus scrofa (Pig).